The chain runs to 1392 residues: Ankyrin repeat domain-containing protein 30B (1392 aa).

Positions 1–21 (MKRLLAAAGKGVRGPEPPNPF) are disordered. 5 ANK repeats span residues 72 to 101 (KKRTALHWACVNGHAEVVTFLVDRKCQLNV), 105 to 134 (EGRTPLMKALQCEREACANILIDAGADLNY), 138 to 167 (YGNTALHYAVYSENLLMVATLLSYGAVIEV), 171 to 200 (ASLTPLLLAIQKRSKQTVEFLLTKNANANA), and 204 to 233 (SKCTALMLAICEGSSEIVGMLLQQNVDVFA). 6 disordered regions span residues 265 to 292 (PKNPQNTNPEGTSTGTPDEAAPLAERTP), 558 to 587 (AQMFPSESKQKDDEENSWDSESPCETVSQK), 636 to 656 (DRETFKAESPDKDGLLKPTCG), 671 to 690 (RETLKAESPDNDGLLKPTCG), 830 to 877 (KEGA…SDSE), and 904 to 926 (GKIEESPEKPSHFEPATEMQNSV). 2 stretches are compositionally biased toward polar residues: residues 267–280 (NPQNTNPEGTSTGT) and 576–586 (DSESPCETVSQ). Positions 636–650 (DRETFKAESPDKDGL) are enriched in basic and acidic residues. Over residues 830 to 840 (KEGATKTVTGQ) the composition is skewed to polar residues. Basic and acidic residues-rich tracts occupy residues 864-874 (LGRKEDTKSTS) and 904-915 (GKIEESPEKPSH). Coiled-coil stretches lie at residues 960 to 1168 (RELK…KQDK) and 1270 to 1318 (ETQC…QQLV).

In terms of tissue distribution, expressed in brain, breast and testis.

The protein is Ankyrin repeat domain-containing protein 30B (ANKRD30B) of Homo sapiens (Human).